A 232-amino-acid polypeptide reads, in one-letter code: Thiamine import ATP-binding protein ThiQ (232 aa).

An ABC transporter domain is found at 2–230 (LKLTDITWLY…KASASALLGI (229 aa)). An ATP-binding site is contributed by 32–39 (GPSGAGKS).

It belongs to the ABC transporter superfamily. Thiamine importer (TC 3.A.1.19.1) family. The complex is composed of two ATP-binding proteins (ThiQ), two transmembrane proteins (ThiP) and a solute-binding protein (ThiB).

It localises to the cell inner membrane. It catalyses the reaction thiamine(out) + ATP + H2O = thiamine(in) + ADP + phosphate + H(+). Part of the ABC transporter complex ThiBPQ involved in thiamine import. Responsible for energy coupling to the transport system. The polypeptide is Thiamine import ATP-binding protein ThiQ (Escherichia coli O6:H1 (strain CFT073 / ATCC 700928 / UPEC)).